The following is a 323-amino-acid chain: Sodium/potassium-transporting ATPase subunit beta-2 (323 aa).

The Cytoplasmic segment spans residues 1 to 50; it reads MPTITEDCIDGFQQYYSRPPERPKKKSLKQMVYDSEDNSYFGRSMDSWAK. Residues 51–71 traverse the membrane as a helical; Signal-anchor for type II membrane protein segment; that stretch reads IGIFYVAFYGVLAALVAICMW. The Extracellular portion of the chain corresponds to 72 to 323; sequence AFFQTLDPRI…GSVHYELLID (252 aa). Intrachain disulfides connect Cys-153-Cys-165 and Cys-175-Cys-189. Residues Asn-180 and Asn-206 are each glycosylated (N-linked (GlcNAc...) asparagine). The cysteines at positions 241 and 298 are disulfide-linked.

It belongs to the X(+)/potassium ATPases subunit beta family. As to quaternary structure, the sodium/potassium-transporting ATPase is composed of a catalytic alpha subunit, an auxiliary non-catalytic beta subunit and an additional regulatory subunit. In terms of tissue distribution, in embryos, it is expressed in the neurons of the CNS and PNS, in Garland cells and posterior spiracles. In adults, it shows a nervous system specific distribution: optic lobes, brain, thoracic ganglia and axonal pathways in the leg. Both isoforms concentrate in the adult head, isoform 2.2 being predominant. Both isoforms are weakly expressed in the thorax and very poorly expressed in the abdomen.

It localises to the cell membrane. Its function is as follows. This is the non-catalytic component of the active enzyme, which catalyzes the hydrolysis of ATP coupled with the exchange of Na(+) and K(+) ions across the plasma membrane. The beta subunit regulates, through assembly of alpha/beta heterodimers, the number of sodium pumps transported to the plasma membrane. This Drosophila melanogaster (Fruit fly) protein is Sodium/potassium-transporting ATPase subunit beta-2 (nrv2).